The chain runs to 360 residues: Probable L-asparaginase 1 (360 aa).

Residues 1–16 (MWRSIISFLFFSVALC) form the signal peptide. Residues N27, N35, and N40 are each glycosylated (N-linked (GlcNAc...) asparagine). An Asparaginase/glutaminase domain is found at 39–359 (PNVTIFAMGG…QNITDIFSLE (321 aa)). T49 (O-isoaspartyl threonine intermediate) is an active-site residue. N82 is a glycosylation site (N-linked (GlcNAc...) asparagine). S96 is a binding site for substrate. The N-linked (GlcNAc...) asparagine glycan is linked to N106. A substrate-binding site is contributed by 129 to 130 (TD). 5 N-linked (GlcNAc...) asparagine glycosylation sites follow: N144, N179, N246, N302, and N351.

It belongs to the asparaginase 1 family.

The protein resides in the secreted. The protein localises to the cell wall. It carries out the reaction L-asparagine + H2O = L-aspartate + NH4(+). This Schizosaccharomyces pombe (strain 972 / ATCC 24843) (Fission yeast) protein is Probable L-asparaginase 1.